A 367-amino-acid polypeptide reads, in one-letter code: Chorismate synthase (367 aa).

The disordered stretch occupies residues 41–60 (FTHDLQRRASGKSRHTSARR). The NADP(+) site is built by Arg-48 and Arg-54. Residues 125–127 (RSS), 238–239 (NA), Gly-278, 293–297 (KPTSS), and Arg-319 contribute to the FMN site.

This sequence belongs to the chorismate synthase family. As to quaternary structure, homotetramer. The cofactor is FMNH2.

It carries out the reaction 5-O-(1-carboxyvinyl)-3-phosphoshikimate = chorismate + phosphate. The protein operates within metabolic intermediate biosynthesis; chorismate biosynthesis; chorismate from D-erythrose 4-phosphate and phosphoenolpyruvate: step 7/7. In terms of biological role, catalyzes the anti-1,4-elimination of the C-3 phosphate and the C-6 proR hydrogen from 5-enolpyruvylshikimate-3-phosphate (EPSP) to yield chorismate, which is the branch point compound that serves as the starting substrate for the three terminal pathways of aromatic amino acid biosynthesis. This reaction introduces a second double bond into the aromatic ring system. In Xanthomonas euvesicatoria pv. vesicatoria (strain 85-10) (Xanthomonas campestris pv. vesicatoria), this protein is Chorismate synthase.